We begin with the raw amino-acid sequence, 94 residues long: Integration host factor subunit beta (94 aa).

This sequence belongs to the bacterial histone-like protein family. In terms of assembly, heterodimer of an alpha and a beta chain.

Functionally, this protein is one of the two subunits of integration host factor, a specific DNA-binding protein that functions in genetic recombination as well as in transcriptional and translational control. This is Integration host factor subunit beta (ihfB) from Serratia marcescens.